A 317-amino-acid chain; its full sequence is Ferrochelatase (317 aa).

2 residues coordinate Fe cation: H192 and E271.

It belongs to the ferrochelatase family.

The protein resides in the cytoplasm. It catalyses the reaction heme b + 2 H(+) = protoporphyrin IX + Fe(2+). Its pathway is porphyrin-containing compound metabolism; protoheme biosynthesis; protoheme from protoporphyrin-IX: step 1/1. Functionally, catalyzes the ferrous insertion into protoporphyrin IX. This is Ferrochelatase from Geobacter metallireducens (strain ATCC 53774 / DSM 7210 / GS-15).